A 1006-amino-acid chain; its full sequence is Pleckstrin homology domain-containing family G member 5 (1006 aa).

3 disordered regions span residues 1-71 (MHYD…HTDD), 148-198 (PAKP…DILA), and 212-242 (EASI…GDSW). A compositionally biased stretch (acidic residues) spans 36-45 (DLEEEEEESS). Composition is skewed to basic and acidic residues over residues 151–165 (PGDE…KDSK) and 183–194 (ERVDAQSRRESL). Low complexity predominate over residues 224–242 (SSCSLPSGSSGSTNTGDSW). The DH domain occupies 336 to 528 (HQQEAVWELL…ERFIHHVNAC (193 aa)). In terms of domain architecture, PH spans 584–684 (QLLLEGSLRM…WVDTIYNAQN (101 aa)). Disordered stretches follow at residues 690–754 (RAQE…ASDG), 768–820 (DTLS…SAYG), and 837–863 (AELV…RRTP). The segment covering 704-726 (LEEEEDEQEEEEEEEEEEEEGED) has biased composition (acidic residues). Polar residues-rich tracts occupy residues 727 to 754 (SGTS…ASDG) and 769 to 785 (TLSS…SQSD). Thr729 carries the phosphothreonine modification. Ser734 carries the phosphoserine modification. The span at 786-803 (ETSLSTTASSATPTSELL) shows a compositional bias: low complexity. Residues 847–856 (PRVPSPPPSP) show a composition bias toward pro residues. Phosphoserine is present on residues Ser851, Ser876, and Ser881. Positions 950 to 979 (AGSHRKRCGDLPSGASPRVQPEPPPGVSAQ) are disordered.

As to quaternary structure, interacts with GIPC1/synectin and RHOA. In terms of tissue distribution, predominantly expressed in the peripheral nervous system and brain. Highest expression is observed in heart, lung, kidney, testis and moderate expression is present in spleen, pancreas, skeletal muscle, ovary and liver. Weakly expressed in glioblastoma (GBM) cell lines.

It is found in the cytoplasm. Its subcellular location is the perinuclear region. It localises to the cell membrane. The protein localises to the cell junction. The protein resides in the cell projection. It is found in the lamellipodium. Functionally, functions as a guanine exchange factor (GEF) for RAB26 and thus regulates autophagy of synaptic vesicles in axon terminal of motoneurons. Involved in the control of neuronal cell differentiation. Plays a role in angiogenesis through regulation of endothelial cells chemotaxis. Also affects the migration, adhesion, and matrix/bone degradation in macrophages and osteoclasts. The sequence is that of Pleckstrin homology domain-containing family G member 5 (PLEKHG5) from Homo sapiens (Human).